The chain runs to 653 residues: E3 ubiquitin-protein ligase TRIM32 (653 aa).

A2 bears the N-acetylalanine mark. The RING-type zinc-finger motif lies at C20 to S65. Residue S55 is modified to Phosphoserine; by CHEK2. Zn(2+) is bound by residues C100, C103, C123, and H128. The B box-type zinc finger occupies C103–H133. Positions V138–D197 form a coiled coil. S328, S335, and S339 each carry phosphoserine. NHL repeat units follow at residues L358–K401, D415–D458, G459–D499, G562–G605, and G606–H646.

The protein belongs to the TRIM/RBCC family. In terms of assembly, it self-associates. Interacts with DTNBP1. Interacts with PIAS4/PIASY upon treatment with UVB and TNF-alpha. Interacts with AMBRA1; promoting activation of ULK1 through unanchored 'Lys-63'-linked polyubiquitin chains. Interacts with TICAM1 and TAX1BP1; these interactions target TICAM1 to TAX1BP1-mediated selective autophagic degradation. As to quaternary structure, (Microbial infection) Interacts with S.typhimurium protein SseK3; SseK3 does not glycosylate TRIM32. In terms of processing, ubiquitinated. Post-translationally, phosphorylation at Ser-55 by CHEK2 under oxidative stress, activates the E3 ligase activity and promotes ATG7 ubiquitination leading to positive regulation of the autophagosme assembly. As to expression, spleen, thymus, prostate, testis, ovary, intestine, colon and skeletal muscle.

It is found in the cytoplasm. The protein localises to the mitochondrion. Its subcellular location is the endoplasmic reticulum. It carries out the reaction S-ubiquitinyl-[E2 ubiquitin-conjugating enzyme]-L-cysteine + [acceptor protein]-L-lysine = [E2 ubiquitin-conjugating enzyme]-L-cysteine + N(6)-ubiquitinyl-[acceptor protein]-L-lysine.. The protein operates within protein modification; protein ubiquitination. In terms of biological role, E3 ubiquitin ligase that plays a role in various biological processes including neural stem cell differentiation, innate immunity, inflammatory resonse and autophagy. Plays a role in virus-triggered induction of IFN-beta and TNF-alpha by mediating the ubiquitination of STING1. Mechanistically, targets STING1 for 'Lys-63'-linked ubiquitination which promotes the interaction of STING1 with TBK1. Regulates bacterial clearance and promotes autophagy in Mycobacterium tuberculosis-infected macrophages. Negatively regulates TLR3/4-mediated innate immune and inflammatory response by triggering the autophagic degradation of TICAM1 in an E3 activity-independent manner. Plays an essential role in oxidative stress induced cell death by inducing loss of transmembrane potential and enhancing mitochondrial reactive oxygen species (ROS) production during oxidative stress conditions. Ubiquitinates XIAP and targets it for proteasomal degradation. Ubiquitinates DTNBP1 (dysbindin) and promotes its degradation. May ubiquitinate BBS2. Ubiquitinates PIAS4/PIASY and promotes its degradation in keratinocytes treated with UVB and TNF-alpha. Also acts as a regulator of autophagy by mediating formation of unanchored 'Lys-63'-linked polyubiquitin chains that activate ULK1: interaction with AMBRA1 is required for ULK1 activation. Positively regulates dendritic branching by promoting ubiquitination and subsequent degradation of the epigenetic factor CDYL. Under metabolic stress and phosphorylation by CHK2, mediates 'Lys-63'-linked ubiquitination of ATG7 at 'Lys-45' to initiate autophagy. (Microbial infection) May play a significant role in mediating the biological activity of the HIV-1 Tat protein in vivo. Binds specifically to the activation domain of HIV-1 Tat and can also interact with the HIV-2 and EIAV Tat proteins in vivo. In Homo sapiens (Human), this protein is E3 ubiquitin-protein ligase TRIM32.